A 64-amino-acid polypeptide reads, in one-letter code: Protein sigN173 (64 aa).

This Dictyostelium discoideum (Social amoeba) protein is Protein sigN173.